A 375-amino-acid chain; its full sequence is 23S rRNA (uracil(747)-C(5))-methyltransferase RlmC (375 aa).

4 residues coordinate [4Fe-4S] cluster: C3, C11, C14, and C87. Q212, F241, E262, and N307 together coordinate S-adenosyl-L-methionine. The active-site Nucleophile is C334.

The protein belongs to the class I-like SAM-binding methyltransferase superfamily. RNA M5U methyltransferase family. RlmC subfamily.

It catalyses the reaction uridine(747) in 23S rRNA + S-adenosyl-L-methionine = 5-methyluridine(747) in 23S rRNA + S-adenosyl-L-homocysteine + H(+). In terms of biological role, catalyzes the formation of 5-methyl-uridine at position 747 (m5U747) in 23S rRNA. The chain is 23S rRNA (uracil(747)-C(5))-methyltransferase RlmC from Salmonella typhi.